The primary structure comprises 261 residues: Small ribosomal subunit protein eS1A (261 aa).

Residues 1 to 18 (MTLGKNKRISKGGKRGKK) are compositionally biased toward basic residues. Residues 1-23 (MTLGKNKRISKGGKRGKKKTQET) are disordered.

This sequence belongs to the eukaryotic ribosomal protein eS1 family. As to quaternary structure, component of the small ribosomal subunit. Mature ribosomes consist of a small (40S) and a large (60S) subunit. The 40S subunit contains about 33 different proteins and 1 molecule of RNA (18S). The 60S subunit contains about 49 different proteins and 3 molecules of RNA (25S, 5.8S and 5S).

The protein resides in the cytoplasm. The polypeptide is Small ribosomal subunit protein eS1A (Trypanosoma cruzi (strain CL Brener)).